The chain runs to 295 residues: Glutamyl-Q tRNA(Asp) synthetase (295 aa).

L-glutamate contacts are provided by residues 5-9 (RFAPS) and glutamate 41. The short motif at 8–18 (PSPTGLLHIGS) is the 'HIGH' region element. The Zn(2+) site is built by cysteine 97, cysteine 99, tyrosine 117, and cysteine 121. L-glutamate contacts are provided by tyrosine 178 and arginine 196. Residues 234-238 (KWSKQ) carry the 'KMSKS' region motif. Lysine 237 contacts ATP.

It belongs to the class-I aminoacyl-tRNA synthetase family. GluQ subfamily. Requires Zn(2+) as cofactor.

Its function is as follows. Catalyzes the tRNA-independent activation of glutamate in presence of ATP and the subsequent transfer of glutamate onto a tRNA(Asp). Glutamate is transferred on the 2-amino-5-(4,5-dihydroxy-2-cyclopenten-1-yl) moiety of the queuosine in the wobble position of the QUC anticodon. The chain is Glutamyl-Q tRNA(Asp) synthetase from Neisseria gonorrhoeae (strain ATCC 700825 / FA 1090).